Consider the following 462-residue polypeptide: NAD-capped RNA hydrolase NUDT12 (462 aa).

3 ANK repeats span residues 11 to 40 (EIVT…SLLN), 45 to 74 (NGWT…DRSI), and 78 to 98 (SRQT…ANLL). K185 carries the post-translational modification N6-succinyllysine. Zn(2+) is bound by residues C284 and C287. K292 carries the post-translational modification N6-succinyllysine. Residues C302 and C307 each coordinate Zn(2+). Substrate contacts are provided by residues Y318, 354 to 356 (AGF), E370, E374, and E415. In terms of domain architecture, Nudix hydrolase spans 319–453 (PRVDPVVIMQ…SRAIAHQLIK (135 aa)). Mg(2+) is bound by residues A354, E370, E374, and E415. Positions 355–376 (GFIEPGETIEDAVRREVEEESG) match the Nudix box motif. Positions 460 to 462 (PNL) match the Microbody targeting signal motif.

It belongs to the Nudix hydrolase family. NudC subfamily. Homodimer. Homodimerization is essential for its catalytic activity and protein stability. Interacts (via ANK repeats) with BLMH. Requires Mg(2+) as cofactor. It depends on Zn(2+) as a cofactor.

It localises to the cytoplasm. The protein localises to the peroxisome. It is found in the cytoplasmic granule. It catalyses the reaction a 5'-end NAD(+)-phospho-ribonucleoside in mRNA + H2O = a 5'-end phospho-adenosine-phospho-ribonucleoside in mRNA + beta-nicotinamide D-ribonucleotide + 2 H(+). The catalysed reaction is NAD(+) + H2O = beta-nicotinamide D-ribonucleotide + AMP + 2 H(+). It carries out the reaction NADH + H2O = reduced beta-nicotinamide D-ribonucleotide + AMP + 2 H(+). The enzyme catalyses NADPH + H2O = reduced beta-nicotinamide D-ribonucleotide + adenosine 2',5'-bisphosphate + 2 H(+). Its function is as follows. mRNA decapping enzyme that specifically removes the nicotinamide adenine dinucleotide (NAD) cap from a subset of mRNAs by hydrolyzing the diphosphate linkage to produce nicotinamide mononucleotide (NMN) and 5' monophosphate mRNA. The NAD-cap is present at the 5'-end of some RNAs; in contrast to the canonical N7 methylguanosine (m7G) cap, the NAD cap promotes mRNA decay. Preferentially acts on NAD-capped transcripts in response to nutrient stress. Also acts on free nicotinamide adenine dinucleotide molecules: hydrolyzes NAD(H) into NMN(H) and AMP, and NADPH into NMNH and 2',5'-ADP. May act to regulate the concentration of peroxisomal nicotinamide nucleotide cofactors required for oxidative metabolism in this organelle. Regulates the levels of circadian clock components PER1, PER2, PER3 and CRY2 in the liver. The polypeptide is NAD-capped RNA hydrolase NUDT12 (Homo sapiens (Human)).